The chain runs to 437 residues: Glutamate-1-semialdehyde 2,1-aminomutase 1 (437 aa).

At lysine 268 the chain carries N6-(pyridoxal phosphate)lysine.

This sequence belongs to the class-III pyridoxal-phosphate-dependent aminotransferase family. HemL subfamily. As to quaternary structure, homodimer. Pyridoxal 5'-phosphate is required as a cofactor.

It localises to the cytoplasm. It carries out the reaction (S)-4-amino-5-oxopentanoate = 5-aminolevulinate. The protein operates within porphyrin-containing compound metabolism; protoporphyrin-IX biosynthesis; 5-aminolevulinate from L-glutamyl-tRNA(Glu): step 2/2. This Halalkalibacterium halodurans (strain ATCC BAA-125 / DSM 18197 / FERM 7344 / JCM 9153 / C-125) (Bacillus halodurans) protein is Glutamate-1-semialdehyde 2,1-aminomutase 1.